The chain runs to 272 residues: Homeobox protein Hox-D12 (272 aa).

The homeobox DNA-binding region spans 204–263; that stretch reads SRRKRKPYTKQQIAELENEFLANEFINRQKRKELSDRLNLSDQQVKIWFQNRRMKKKRLV.

The protein belongs to the Abd-B homeobox family.

Its subcellular location is the nucleus. Its function is as follows. Sequence-specific transcription factor which is part of a developmental regulatory system that provides cells with specific positional identities on the anterior-posterior axis. This chain is Homeobox protein Hox-D12 (HOXD12), found in Heterodontus francisci (Horn shark).